We begin with the raw amino-acid sequence, 243 residues long: Venom nerve growth factor 3 (243 aa).

The N-terminal stretch at 1-18 (MSMLCYTLIIAFLIGIWA) is a signal peptide. Positions 19-125 (APKSEDNVPL…ALNRNIRAKR (107 aa)) are excised as a propeptide. Basic and acidic residues predominate over residues 47-66 (GLKTSRNTDQRHPAPKKAED). Residues 47-67 (GLKTSRNTDQRHPAPKKAEDQ) form a disordered region. Disulfide bonds link Cys-139-Cys-204, Cys-182-Cys-232, and Cys-192-Cys-234. Residues Asn-148 and Asn-151 are each glycosylated (N-linked (GlcNAc...) asparagine).

It belongs to the NGF-beta family. Homodimer; non-covalently linked. In terms of tissue distribution, expressed by the venom gland.

It is found in the secreted. In terms of biological role, nerve growth factor is important for the development and maintenance of the sympathetic and sensory nervous systems. It stimulates division and differentiation of sympathetic and embryonic sensory neurons as well as basal forebrain cholinergic neurons in the brain. Its relevance in the snake venom is not clear. However, it has been shown to inhibit metalloproteinase-dependent proteolysis of platelet glycoprotein Ib alpha, suggesting a metalloproteinase inhibition to prevent metalloprotease autodigestion and/or protection against prey proteases. Binds a lipid between the two protein chains in the homodimer. The lipid-bound form promotes histamine relase from mouse mast cells, contrary to the lipid-free form. The sequence is that of Venom nerve growth factor 3 from Tropidechis carinatus (Australian rough-scaled snake).